The following is a 73-amino-acid chain: Acyl carrier protein (73 aa).

The region spanning methionine 1–lysine 73 is the Carrier domain. Serine 35 carries the O-(pantetheine 4'-phosphoryl)serine modification.

This sequence belongs to the acyl carrier protein (ACP) family. Post-translationally, 4'-phosphopantetheine is transferred from CoA to a specific serine of apo-ACP by AcpS. This modification is essential for activity because fatty acids are bound in thioester linkage to the sulfhydryl of the prosthetic group.

It is found in the cytoplasm. It functions in the pathway lipid metabolism; fatty acid biosynthesis. Carrier of the growing fatty acid chain in fatty acid biosynthesis. The protein is Acyl carrier protein of Lactococcus lactis subsp. lactis (strain IL1403) (Streptococcus lactis).